We begin with the raw amino-acid sequence, 744 residues long: 3-isopropylmalate dehydratase (744 aa).

Residues Cys341, Cys401, and Cys404 each contribute to the [4Fe-4S] cluster site.

It belongs to the aconitase/IPM isomerase family. Monomer. [4Fe-4S] cluster is required as a cofactor.

It catalyses the reaction (2R,3S)-3-isopropylmalate = (2S)-2-isopropylmalate. Its pathway is amino-acid biosynthesis; L-leucine biosynthesis; L-leucine from 3-methyl-2-oxobutanoate: step 2/4. In terms of biological role, catalyzes the isomerization between 2-isopropylmalate and 3-isopropylmalate, via the formation of 2-isopropylmaleate. The protein is 3-isopropylmalate dehydratase (leu1) of Phycomyces blakesleeanus (strain ATCC 8743b / DSM 1359 / FGSC 10004 / NBRC 33097 / NRRL 1555).